A 108-amino-acid chain; its full sequence is Nucleoid-associated protein Avin_19840 (108 aa).

This sequence belongs to the YbaB/EbfC family. Homodimer.

Its subcellular location is the cytoplasm. The protein resides in the nucleoid. Binds to DNA and alters its conformation. May be involved in regulation of gene expression, nucleoid organization and DNA protection. The protein is Nucleoid-associated protein Avin_19840 of Azotobacter vinelandii (strain DJ / ATCC BAA-1303).